A 700-amino-acid polypeptide reads, in one-letter code: Elongation factor G (700 aa).

Positions 8-290 (ERYRNIGISA…AVIDYLPSPV (283 aa)) constitute a tr-type G domain. GTP-binding positions include 17-24 (AHIDAGKT), 88-92 (DTPGH), and 142-145 (NKMD).

This sequence belongs to the TRAFAC class translation factor GTPase superfamily. Classic translation factor GTPase family. EF-G/EF-2 subfamily.

It is found in the cytoplasm. Its function is as follows. Catalyzes the GTP-dependent ribosomal translocation step during translation elongation. During this step, the ribosome changes from the pre-translocational (PRE) to the post-translocational (POST) state as the newly formed A-site-bound peptidyl-tRNA and P-site-bound deacylated tRNA move to the P and E sites, respectively. Catalyzes the coordinated movement of the two tRNA molecules, the mRNA and conformational changes in the ribosome. The chain is Elongation factor G from Paracidovorax citrulli (strain AAC00-1) (Acidovorax citrulli).